A 331-amino-acid chain; its full sequence is DSC E3 ubiquitin ligase complex subunit D (331 aa).

Asparagine 26 carries an N-linked (GlcNAc...) asparagine glycan. The next 3 helical transmembrane spans lie at 63–83 (ILIY…ILFA), 107–127 (PFIG…NFFT), and 159–179 (LFLL…LIVE). A compositionally biased stretch (basic and acidic residues) spans 197–214 (VQDHDSEERGVHRTRPES). The tract at residues 197–225 (VQDHDSEERGVHRTRPESRSSVVGAELDE) is disordered.

In terms of assembly, component of the DSC E3 ubiquitin ligase complex composed of dscA, dscB, dscC and dscD.

The protein localises to the endoplasmic reticulum membrane. Its pathway is protein modification; protein ubiquitination. Its function is as follows. Component of the DSC E3 ubiquitin ligase complex which is required for the srbA transcriptional activator proteolytic cleavage to release the soluble transcription factor from the membrane in low oxygen or sterol conditions. Required for growth during hypoxia and triazole drug susceptibility, as well as for virulence in a murine model of invasive pulmonary aspergillosis (IPA). This chain is DSC E3 ubiquitin ligase complex subunit D, found in Aspergillus fumigatus (strain CBS 144.89 / FGSC A1163 / CEA10) (Neosartorya fumigata).